The primary structure comprises 164 residues: MEGLDINKLLDISDLPGIDGEEIKVYEPLQLVEVKSNPQNRTPDLEDDYGVVRRNMHFQQQMLMDAAKIFLETAKNADSPRHMEVFATLMGQMTTTNREILKLHKDMKDITSEQVGTKGAVPTGQMNIQNATVFMGSPTELMDEIGDAYEAQEAREKVINGTTD.

The tract at residues 1–35 (MEGLDINKLLDISDLPGIDGEEIKVYEPLQLVEVK) is helix-turn-helix (HTH). An interaction with gp17 region spans residues 1 to 35 (MEGLDINKLLDISDLPGIDGEEIKVYEPLQLVEVK). The oligomerization stretch occupies residues 36–114 (SNPQNRTPDL…KDMKDITSEQ (79 aa)). The interaction with gp17 stretch occupies residues 115-164 (VGTKGAVPTGQMNIQNATVFMGSPTELMDEIGDAYEAQEAREKVINGTTD).

As to quaternary structure, homooctamer. Interacts with the terminase large subunit gp17; the active complex is probably heterooligomeric.

Its function is as follows. The terminase small subunit binds to the packaging initiation site and regulates the ATPase activity of the terminase large subunit. The terminase lies at a unique vertex of the procapsid and is composed of two subunits, a small terminase subunit involved in viral DNA recognition (packaging 'pac' sequence), and a large terminase subunit possessing endonucleolytic and ATPase activities. Both terminase subunits heterooligomerize and are docked on the portal protein to form the packaging machine. The terminase large subunit exhibits endonuclease activity and cleaves the viral genome concatemer once the capsid is full (headful packaging). Once the capsid is packaged with the DNA, the terminase complex is substituted by neck proteins. This is Terminase, small subunit (16) from Enterobacteria phage T4 (Bacteriophage T4).